We begin with the raw amino-acid sequence, 337 residues long: Glyceraldehyde-3-phosphate dehydrogenase (337 aa).

NAD(+)-binding positions include 12–13 (RI), D34, and R79. D-glyceraldehyde 3-phosphate contacts are provided by residues 150–152 (SCT), T181, 210–211 (TG), and R233. C151 (nucleophile) is an active-site residue. N315 is an NAD(+) binding site.

It belongs to the glyceraldehyde-3-phosphate dehydrogenase family. As to quaternary structure, homotetramer.

The protein resides in the cytoplasm. The enzyme catalyses D-glyceraldehyde 3-phosphate + phosphate + NAD(+) = (2R)-3-phospho-glyceroyl phosphate + NADH + H(+). Its pathway is carbohydrate degradation; glycolysis; pyruvate from D-glyceraldehyde 3-phosphate: step 1/5. The sequence is that of Glyceraldehyde-3-phosphate dehydrogenase from Cryphonectria parasitica (Chestnut blight fungus).